Consider the following 223-residue polypeptide: 7-cyano-7-deazaguanine synthase (223 aa).

Position 11 to 21 (I11 to A21) interacts with ATP. C189, C197, C200, and C203 together coordinate Zn(2+).

This sequence belongs to the QueC family. Zn(2+) serves as cofactor.

It catalyses the reaction 7-carboxy-7-deazaguanine + NH4(+) + ATP = 7-cyano-7-deazaguanine + ADP + phosphate + H2O + H(+). It participates in purine metabolism; 7-cyano-7-deazaguanine biosynthesis. Its function is as follows. Catalyzes the ATP-dependent conversion of 7-carboxy-7-deazaguanine (CDG) to 7-cyano-7-deazaguanine (preQ(0)). The protein is 7-cyano-7-deazaguanine synthase of Campylobacter fetus subsp. fetus (strain 82-40).